Consider the following 1104-residue polypeptide: SWI/SNF complex subunit SMARCC1 (1104 aa).

The segment at 27–301 (LAVYRRKDGG…PVSFRQRIST (275 aa)) is marR-like, BRCT and chromo domains module. Residues 37-163 (PASKFWESPD…IEKTLVQNNC (127 aa)) enclose the MarR-like domain. Positions 167-210 (PNIYLIPDIDLKLANKLKDIIKRHQGTFTDEKSKASHHIYPYPS) constitute a BRCT; N-terminus domain. K178 is covalently cross-linked (Glycyl lysine isopeptide (Lys-Gly) (interchain with G-Cter in SUMO2)). In terms of domain architecture, Chromo spans 216–244 (EWLRPVMRRDKQVLVHWGFYPDSYDTWVH). Residues 260–284 (KPWKVHVKWILDTDVFNEWMNEEDY) form the BRCT; C-terminus domain. A disordered region spans residues 295–445 (FRQRISTKNE…PGEDNVTEQT (151 aa)). Residues 301–317 (TKNEEPVRSPERRDRKA) are compositionally biased toward basic and acidic residues. A phosphoserine mark is found at S309, S327, and S329. Phosphothreonine is present on T334. An N6-acetyllysine mark is found at K344 and K345. S349 is modified (phosphoserine). K353 bears the N6-acetyllysine mark. Phosphoserine is present on S356. The residue at position 358 (K358) is an N6-acetyllysine; alternate. A Glycyl lysine isopeptide (Lys-Gly) (interchain with G-Cter in SUMO2); alternate cross-link involves residue K358. The residue at position 397 (T397) is a Phosphothreonine. Residues 448–545 (IIIPSYASWF…YQVDPESRPM (98 aa)) enclose the SWIRM domain. S572 carries the phosphoserine modification. A Glycyl lysine isopeptide (Lys-Gly) (interchain with G-Cter in SUMO2) cross-link involves residue K591. The region spanning 617–668 (SAGREWTEQETLLLLEALEMYKDDWNKVSEHVGSRTQDECILHFLRLPIEDP) is the SANT domain. A Glycyl lysine isopeptide (Lys-Gly) (interchain with G-Cter in SUMO2) cross-link involves residue K738. The tract at residues 744-859 (ARASGKVDPT…DAGKKKVEHE (116 aa)) is disordered. S775 carries the phosphoserine modification. Residues 775–784 (SEEEKMETDP) show a composition bias toward acidic residues. Basic and acidic residues predominate over residues 788–859 (QPEKAENKVE…DAGKKKVEHE (72 aa)). K795 is covalently cross-linked (Glycyl lysine isopeptide (Lys-Gly) (interchain with G-Cter in SUMO2)). S821 and S824 each carry phosphoserine. Glycyl lysine isopeptide (Lys-Gly) (interchain with G-Cter in SUMO2) cross-links involve residues K828 and K855. Positions 909–945 (KLRHFEELETIMDREKEALEQQRQQLLTERQNFHMEQ) form a coiled coil. The residue at position 947 (K947) is an N6-acetyllysine. 2 disordered regions span residues 955–1021 (QQME…PGPG) and 1041–1104 (IHPT…SATP). The segment covering 956–973 (QMEQQQQHGQTPQQAHQH) has biased composition (low complexity). Composition is skewed to pro residues over residues 994 to 1017 (QQPP…PGQI) and 1048 to 1057 (PTPPGMPPMP). R1064 carries the post-translational modification Asymmetric dimethylarginine. The segment covering 1073-1104 (MYPPPPQQQQPPPPADGVPPPPAPGPPASATP) has biased composition (pro residues).

Belongs to the SMARCC family. In terms of assembly, component of the multiprotein chromatin-remodeling complexes SWI/SNF: SWI/SNF-A (BAF), SWI/SNF-B (PBAF) and related complexes. The canonical complex contains a catalytic subunit (either SMARCA4/BRG1/BAF190A or SMARCA2/BRM/BAF190B) and at least SMARCE1, ACTL6A/BAF53, SMARCC1/BAF155, SMARCC2/BAF170, and SMARCB1/SNF5/BAF47. Other subunits specific to each of the complexes may also be present permitting several possible combinations developmentally and tissue specific. Component of the BAF complex, which includes at least actin (ACTB), ARID1A/BAF250A, ARID1B/BAF250B, SMARCA2/BRM, SMARCA4/BRG1, ACTL6A/BAF53, ACTL6B/BAF53B, SMARCE1/BAF57, SMARCC1/BAF155, SMARCC2/BAF170, SMARCB1/SNF5/INI1, and one or more SMARCD1/BAF60A, SMARCD2/BAF60B, or SMARCD3/BAF60C. In muscle cells, the BAF complex also contains DPF3. Component of neural progenitors-specific chromatin remodeling complex (npBAF complex) composed of at least, ARID1A/BAF250A or ARID1B/BAF250B, SMARCD1/BAF60A, SMARCD3/BAF60C, SMARCA2/BRM/BAF190B, SMARCA4/BRG1/BAF190A, SMARCB1/BAF47, SMARCC1/BAF155, SMARCE1/BAF57, SMARCC2/BAF170, PHF10/BAF45A, ACTL6A/BAF53A and actin. Component of neuron-specific chromatin remodeling complex (nBAF complex) composed of at least, ARID1A/BAF250A or ARID1B/BAF250B, SMARCD1/BAF60A, SMARCD3/BAF60C, SMARCA2/BRM/BAF190B, SMARCA4/BRG1/BAF190A, SMARCB1/BAF47, SMARCC1/BAF155, SMARCE1/BAF57, SMARCC2/BAF170, DPF1/BAF45B, DPF3/BAF45C, ACTL6B/BAF53B and actin. Component of the SWI/SNF-B (PBAF) chromatin remodeling complex, at least composed of SMARCA4/BRG1, SMARCB1/BAF47/SNF5, ACTL6A/BAF53A or ACTL6B/BAF53B, SMARCE1/BAF57, SMARCD1/BAF60A, SMARCD2/BAF60B, perhaps SMARCD3/BAF60C, SMARCC1/BAF155, SMARCC2/BAF170, PBRM1/BAF180, ARID2/BAF200 and actin. Component of SWI/SNF (GBAF) subcomplex, which includes at least BICRA or BICRAL (mutually exclusive), BRD9, SS18, SMARCA2/BRM, SMARCA4/BRG1/BAF190A, ACTL6A/BAF53, SMARCC1/BAF155, and SMARCD1/BAF60A. May also interact with the SIN3A histone deacetylase transcription repressor complex in conjunction with SMARCA2 and SMARCA4. The minimal complex composed of SMARCC1 and SMARCA4 seems to be able to associate with cyclin such as CCNE1 or transcription factors such as KLF1 or GATA1. Interacts with NR3C1 and SMARD1. Interacts with TRIP12; leading to disrupt interaction between TRIP12 and SMARCE1 and prevent SMARCE1 ubiquitination. Interacts with CEBPB (when not methylated). Interacts with KDM6B. Interacts with MKKS; the interaction takes place predominantly in the cytoplasm and may modulate SMARCC1 location. Interacts with DPF2. Interacts with PRDM1/BLIMP1. Interacts with DPF3a (isoform 2 of DPF3/BAF45C) and with HDGFL2 in a DPF3a-dependent manner. In terms of tissue distribution, highly expressed in adult brain, testis and thymus.

The protein localises to the nucleus. It localises to the cytoplasm. Its function is as follows. Involved in transcriptional activation and repression of select genes by chromatin remodeling (alteration of DNA-nucleosome topology). Component of SWI/SNF chromatin remodeling complexes that carry out key enzymatic activities, changing chromatin structure by altering DNA-histone contacts within a nucleosome in an ATP-dependent manner. May stimulate the ATPase activity of the catalytic subunit of the complex. Belongs to the neural progenitors-specific chromatin remodeling complex (npBAF complex) and the neuron-specific chromatin remodeling complex (nBAF complex). During neural development a switch from a stem/progenitor to a postmitotic chromatin remodeling mechanism occurs as neurons exit the cell cycle and become committed to their adult state. The transition from proliferating neural stem/progenitor cells to postmitotic neurons requires a switch in subunit composition of the npBAF and nBAF complexes. As neural progenitors exit mitosis and differentiate into neurons, npBAF complexes which contain ACTL6A/BAF53A and PHF10/BAF45A, are exchanged for homologous alternative ACTL6B/BAF53B and DPF1/BAF45B or DPF3/BAF45C subunits in neuron-specific complexes (nBAF). The npBAF complex is essential for the self-renewal/proliferative capacity of the multipotent neural stem cells. The nBAF complex along with CREST plays a role regulating the activity of genes essential for dendrite growth. The sequence is that of SWI/SNF complex subunit SMARCC1 (Smarcc1) from Mus musculus (Mouse).